A 380-amino-acid polypeptide reads, in one-letter code: Cytochrome b (380 aa).

4 helical membrane passes run 33–53, 77–98, 113–133, and 178–198; these read FGSL…FLAM, WLIR…YLHI, WNIG…GYVL, and FFAF…IHLI. Heme b-binding residues include H83 and H97. Heme b is bound by residues H182 and H196. H201 provides a ligand contact to a ubiquinone. The next 4 membrane-spanning stretches (helical) occupy residues 226 to 246, 288 to 308, 320 to 340, and 347 to 367; these read YKDL…ALFS, LGGV…PVLH, FSQF…WIGG, and FIII…ILVP.

This sequence belongs to the cytochrome b family. In terms of assembly, the cytochrome bc1 complex contains 3 respiratory subunits (MT-CYB, CYC1 and UQCRFS1), 2 core proteins (UQCRC1 and UQCRC2) and probably 6 low-molecular weight proteins. Heme b serves as cofactor.

It localises to the mitochondrion inner membrane. Functionally, component of the ubiquinol-cytochrome c reductase complex (complex III or cytochrome b-c1 complex) that is part of the mitochondrial respiratory chain. The b-c1 complex mediates electron transfer from ubiquinol to cytochrome c. Contributes to the generation of a proton gradient across the mitochondrial membrane that is then used for ATP synthesis. This is Cytochrome b (mt-cyb) from Astronotus ocellatus (Oscar).